We begin with the raw amino-acid sequence, 131 residues long: Classical arabinogalactan protein 2 (131 aa).

Positions 1 to 21 (MNSKAMQALIFLGFLATSCLA) are cleaved as a signal peptide. A Pyrrolidone carboxylic acid modification is found at Q22. A 4-hydroxyproline mark is found at P24, P26, P28, P34, and P35. 5 O-linked (Ara...) hydroxyproline glycosylation sites follow: P24, P26, P28, P34, and P35. The tract at residues 24–106 (PAPAPTTVTP…PGPDGAADAP (83 aa)) is disordered. Pro residues-rich tracts occupy residues 25–38 (APAP…PTAL) and 49–64 (IASP…PAPT). 2 stretches are compositionally biased toward low complexity: residues 65–76 (TSPTTSPVASPP) and 90–106 (TPTS…ADAP). The GPI-anchor amidated serine moiety is linked to residue S107. Residues 108 to 131 (AAWANKAFLVGTAVAGALYAVVLA) constitute a propeptide, removed in mature form.

Belongs to the classical AGP family. O-glycosylated on hydroxyprolines; noncontiguous hydroxylproline residues are glycosylated with arabinogalactan.

The protein resides in the cell membrane. Its function is as follows. Proteoglycan that seems to be implicated in diverse developmental roles such as differentiation, cell-cell recognition, embryogenesis and programmed cell death. This Arabidopsis thaliana (Mouse-ear cress) protein is Classical arabinogalactan protein 2 (AGP2).